Here is a 302-residue protein sequence, read N- to C-terminus: Sulfotransferase 1C4 (302 aa).

3'-phosphoadenylyl sulfate is bound at residue 55–60 (KAGTTW). 113 to 115 (KTH) contributes to the substrate binding site. The active-site Proton acceptor is His115. Residues Arg137, Ser145, Tyr200, 234–239 (TSFDVM), and 262–266 (FMRKG) contribute to the 3'-phosphoadenylyl sulfate site.

It belongs to the sulfotransferase 1 family. As to expression, expressed in liver, kidney and jejunum.

It localises to the cytoplasm. It is found in the cytosol. It carries out the reaction a phenol + 3'-phosphoadenylyl sulfate = an aryl sulfate + adenosine 3',5'-bisphosphate + H(+). The catalysed reaction is 17beta-estradiol + 3'-phosphoadenylyl sulfate = 17beta-estradiol 3-sulfate + adenosine 3',5'-bisphosphate + H(+). The enzyme catalyses bisphenol A + 3'-phosphoadenylyl sulfate = bisphenyl A sulfate + adenosine 3',5'-bisphosphate + H(+). In terms of biological role, sulfotransferase that utilizes 3'-phospho-5'-adenylyl sulfate (PAPS) as sulfonate donor to catalyze the sulfate conjugation of phenolic compounds and estrogen (E2). Can also sulfonate estrogenic compounds, however, the dietary flavonoids (phytoestrogen) and environmental estrogens, like bisphenol A are better substrates than 17beta-estradiol (E2). The protein is Sulfotransferase 1C4 (SULT1C4) of Macaca fascicularis (Crab-eating macaque).